We begin with the raw amino-acid sequence, 115 residues long: Large ribosomal subunit protein uL23 (115 aa).

Belongs to the universal ribosomal protein uL23 family. In terms of assembly, part of the 50S ribosomal subunit. Contacts protein L29, and trigger factor when it is bound to the ribosome.

Its function is as follows. One of the early assembly proteins it binds 23S rRNA. One of the proteins that surrounds the polypeptide exit tunnel on the outside of the ribosome. Forms the main docking site for trigger factor binding to the ribosome. The chain is Large ribosomal subunit protein uL23 from Granulibacter bethesdensis (strain ATCC BAA-1260 / CGDNIH1).